A 731-amino-acid chain; its full sequence is Endopolyphosphatase (731 aa).

The Cytoplasmic portion of the chain corresponds to 1–4 (MSLS). The chain crosses the membrane as a helical; Signal-anchor for type II membrane protein span at residues 5 to 25 (RCILGLACLWHGVIASPLGAV). Residues 26-731 (PSNIPIATDL…VEKEDLKKFT (706 aa)) are Vacuolar-facing. Asn-106 carries N-linked (GlcNAc...) asparagine glycosylation. The disordered stretch occupies residues 375-403 (KLQPPPTDSKNSGQLKKGKKGRKGKKKKP). Basic residues predominate over residues 390-402 (KKGKKGRKGKKKK). Asn-433 is a glycosylation site (N-linked (GlcNAc...) asparagine). A disordered region spans residues 456–522 (EQNDRQKHLD…PPGPAYSPQP (67 aa)). 2 stretches are compositionally biased toward basic and acidic residues: residues 457–474 (QNDR…PSHM) and 492–501 (GGDSKPKKPD). The span at 505-519 (PHPPAKSSPPGPAYS) shows a compositional bias: pro residues. 2 N-linked (GlcNAc...) asparagine glycosylation sites follow: Asn-534 and Asn-540. Residues 626–706 (AKSIDVSYES…HKKKKGKKRQ (81 aa)) form a disordered region. Acidic residues predominate over residues 636 to 686 (AAEEEEEEEEEEEEDLFEEVEETDEEEEQEDDDLSDGEEVDDDSDEDELET). Positions 691 to 706 (KHDKKKHKKKKGKKRQ) are enriched in basic residues.

Belongs to the endopolyphosphatase PPN1 family. A divalent metal cation serves as cofactor. In terms of processing, processing by proteases in the vacuole may be required for activation.

It localises to the vacuole membrane. The catalysed reaction is [phosphate](n+1) + n H2O = (n+1) phosphate + n H(+). Catalyzes the hydrolysis of inorganic polyphosphate (polyP) chains of many hundreds of phosphate residues into shorter lengths. The polypeptide is Endopolyphosphatase (epp-1) (Neurospora crassa (strain ATCC 24698 / 74-OR23-1A / CBS 708.71 / DSM 1257 / FGSC 987)).